The sequence spans 469 residues: Ribulose bisphosphate carboxylase large chain (469 aa).

N6,N6,N6-trimethyllysine is present on Lys-8. The substrate site is built by Asn-117 and Thr-167. Lys-169 serves as the catalytic Proton acceptor. Lys-171 contributes to the substrate binding site. 3 residues coordinate Mg(2+): Lys-195, Asp-197, and Glu-198. An N6-carboxylysine modification is found at Lys-195. The active-site Proton acceptor is His-288. Substrate is bound by residues Arg-289, His-321, and Ser-373.

This sequence belongs to the RuBisCO large chain family. Type I subfamily. As to quaternary structure, heterohexadecamer of 8 large chains and 8 small chains; disulfide-linked. The disulfide link is formed within the large subunit homodimers. Requires Mg(2+) as cofactor. In terms of processing, the disulfide bond which can form in the large chain dimeric partners within the hexadecamer appears to be associated with oxidative stress and protein turnover.

It localises to the plastid. The protein resides in the chloroplast. The enzyme catalyses 2 (2R)-3-phosphoglycerate + 2 H(+) = D-ribulose 1,5-bisphosphate + CO2 + H2O. The catalysed reaction is D-ribulose 1,5-bisphosphate + O2 = 2-phosphoglycolate + (2R)-3-phosphoglycerate + 2 H(+). Functionally, ruBisCO catalyzes two reactions: the carboxylation of D-ribulose 1,5-bisphosphate, the primary event in carbon dioxide fixation, as well as the oxidative fragmentation of the pentose substrate in the photorespiration process. Both reactions occur simultaneously and in competition at the same active site. In Akania bidwillii (Turnipwood), this protein is Ribulose bisphosphate carboxylase large chain.